The chain runs to 253 residues: Ribosomal RNA small subunit methyltransferase G (253 aa).

S-adenosyl-L-methionine contacts are provided by residues Gly84, Phe89, Ala135 to Glu136, and Arg154. The disordered stretch occupies residues Thr228–Arg253.

This sequence belongs to the methyltransferase superfamily. RNA methyltransferase RsmG family.

It is found in the cytoplasm. Specifically methylates the N7 position of a guanine in 16S rRNA. This Deinococcus radiodurans (strain ATCC 13939 / DSM 20539 / JCM 16871 / CCUG 27074 / LMG 4051 / NBRC 15346 / NCIMB 9279 / VKM B-1422 / R1) protein is Ribosomal RNA small subunit methyltransferase G.